A 383-amino-acid polypeptide reads, in one-letter code: Schlafen-like protein 3 (383 aa).

The interval 118-266 (FDYQSNFSDV…SDKVYQISSG (149 aa)) is SLFN-like fold. A helical membrane pass occupies residues 354-374 (LLDIQNIGWIFFGTALSFCIY).

This sequence belongs to the Schlafen family. As to quaternary structure, component of the PUCH (precursor of 21U RNA 5'-end cleavage holoenzyme) complex; consisting of tofu-1, tofu-2 and either slfl-3 or slfl-4. Within the complex, interacts (via N-terminus) with tofu-2 (via N-terminus); the presence of tofu-1 is required for the interaction.

The protein localises to the mitochondrion membrane. In terms of biological role, component of the trimeric PUCH (precursor of 21U RNA 5'-end cleavage holoenzyme) complex, that acts as an endoribonuclease processing the 5'-end of precursor Piwi-interacting RNAs (piRNAs). The PUCH complex consists of tofu-1, tofu-2 and either slfl-3 or slfl-4, where tofu-2 exhibits endoribonuclease activity. PUCH-mediated processing strictly requires a 7-methyl-G cap (m7 G-cap) and an uracil at position three (U3). PUCH also exhibits a strict bias for piRNA precursors with an A or G at position 1. Mature piRNA production is enhanced by the interaction of PUCH with the PETISCO complex, which is stabilizing piRNA precursors and allows their processing by PUCH. This chain is Schlafen-like protein 3, found in Caenorhabditis elegans.